A 303-amino-acid polypeptide reads, in one-letter code: Movement protein (303 aa).

The protein belongs to the tobamovirus movement protein family.

The protein localises to the host cytoplasm. Its subcellular location is the host cytoskeleton. The protein resides in the host cell junction. It localises to the host plasmodesma. Its function is as follows. Transports viral genome to neighboring plant cells directly through plasmosdesmata, without any budding. The movement protein allows efficient cell to cell propagation, by bypassing the host cell wall barrier. Forms a ribonucleoprotein complex with viral RNA. Binds microtubules and modulates microtubule stability. Can bind double-stranded DNA. This is Movement protein (MP) from Odontoglossum ringspot virus (isolate Korean Cy) (ORSV-Cy).